The chain runs to 466 residues: Cytochrome c-552 (466 aa).

The signal sequence occupies residues 1 to 27 (MVRILTKKSFALSALVAASLMASGAMA). A heme c-binding site is contributed by histidine 87. Residues cysteine 115, cysteine 118, and lysine 119 each coordinate heme. Positions 153, 156, 157, 195, 198, and 199 each coordinate heme c. Residues glutamate 201, tyrosine 202, lysine 250, and glutamine 252 each coordinate Ca(2+). Residue tyrosine 202 participates in substrate binding. Histidine 253 is a binding site for substrate. Positions 264, 271, 274, 275, 290, 303, 306, 307, and 382 each coordinate heme c.

It belongs to the cytochrome c-552 family. It depends on Ca(2+) as a cofactor. The cofactor is heme c.

Its subcellular location is the periplasm. The enzyme catalyses 6 Fe(III)-[cytochrome c] + NH4(+) + 2 H2O = 6 Fe(II)-[cytochrome c] + nitrite + 8 H(+). Its pathway is nitrogen metabolism; nitrate reduction (assimilation). Its function is as follows. Catalyzes the reduction of nitrite to ammonia, consuming six electrons in the process. The sequence is that of Cytochrome c-552 from Shewanella woodyi (strain ATCC 51908 / MS32).